The following is a 369-amino-acid chain: Chorismate synthase (369 aa).

Residues Arg48 and Arg54 each coordinate NADP(+). Residues 125-127 (RSS), 238-239 (NA), Gly278, 293-297 (KPTSS), and Arg319 each bind FMN.

Belongs to the chorismate synthase family. In terms of assembly, homotetramer. It depends on FMNH2 as a cofactor.

The catalysed reaction is 5-O-(1-carboxyvinyl)-3-phosphoshikimate = chorismate + phosphate. The protein operates within metabolic intermediate biosynthesis; chorismate biosynthesis; chorismate from D-erythrose 4-phosphate and phosphoenolpyruvate: step 7/7. Its function is as follows. Catalyzes the anti-1,4-elimination of the C-3 phosphate and the C-6 proR hydrogen from 5-enolpyruvylshikimate-3-phosphate (EPSP) to yield chorismate, which is the branch point compound that serves as the starting substrate for the three terminal pathways of aromatic amino acid biosynthesis. This reaction introduces a second double bond into the aromatic ring system. The polypeptide is Chorismate synthase (Cupriavidus necator (strain ATCC 17699 / DSM 428 / KCTC 22496 / NCIMB 10442 / H16 / Stanier 337) (Ralstonia eutropha)).